An 86-amino-acid polypeptide reads, in one-letter code: Elongation factor 1-beta (86 aa).

Belongs to the EF-1-beta/EF-1-delta family.

Its function is as follows. Promotes the exchange of GDP for GTP in EF-1-alpha/GDP, thus allowing the regeneration of EF-1-alpha/GTP that could then be used to form the ternary complex EF-1-alpha/GTP/AAtRNA. This chain is Elongation factor 1-beta, found in Methanocorpusculum labreanum (strain ATCC 43576 / DSM 4855 / Z).